The following is a 735-amino-acid chain: Serine/threonine-protein kinase BRSK2 (735 aa).

Residues 20 to 271 form the Protein kinase domain; sequence YRLEKTLGKG…LEHIQKHIWY (252 aa). ATP-binding positions include 26–34 and K49; that span reads LGKGQTGLV. The active-site Proton acceptor is D142. Residue T175 is modified to Phosphothreonine; by LKB1. At T261 the chain carries Phosphothreonine; by PKA. Phosphoserine is present on S295. A UBA domain is found at 298–340; that stretch reads DIDPDVLDSMHSLGCFRDRNKLLQDLLSEEENQEKMIYFLLLD. The segment covering 346 to 367 has biased composition (basic and acidic residues); sequence PSHEDEDLPPRNEIDPPRKRVD. Disordered stretches follow at residues 346-476, 493-514, and 682-735; these read PSHE…GVPW, FHRR…PESS, and KNGQ…REQP. Residues S368, S383, S394, S413, A417, S424, and S428 each carry the phosphoserine modification. Residues 411 to 429 show a composition bias toward low complexity; the sequence is SRSISGASSGLSTSPLSSP. Pro residues predominate over residues 432 to 446; it reads TPHPSPRGSPLPTPK. S456 carries the phosphoserine modification. Residues T460, T464, and T510 each carry the phosphothreonine modification. Residues S513 and S514 each carry the phosphoserine modification.

It belongs to the protein kinase superfamily. CAMK Ser/Thr protein kinase family. SNF1 subfamily. As to quaternary structure, interacts with FZR1, a regulatory subunit of the APC ubiquitin ligase complex. Interacts with COPS5. Interacts with PAK1. It depends on Mg(2+) as a cofactor. Post-translationally, may be phosphorylated at Thr-261 by PKA. Phosphorylated at Thr-175 by STK11/LKB1 in complex with STE20-related adapter-alpha (STRADA) pseudo kinase and CAB39. Not phosphorylated at Thr-175 by CaMKK2. In contrast, it is phosphorylated and activated by CaMKK1. May be inactivated via dephosphorylation of Thr-175 by PP2C. In terms of processing, polyubiquitinated by the APC complex in conjunction with FZR1, leading to its proteasomal degradation. Targeted for proteasomal degradation by interaction with COPS5. BRSK2 levels change during the cell cycle. BRSK2 levels are low at the G1/S boundary and gradually increase as cells progress into G2 phase. BRSK2 levels decrease rapidly at the end of mitosis.

It localises to the cytoplasm. Its subcellular location is the cytoskeleton. It is found in the microtubule organizing center. The protein resides in the centrosome. The protein localises to the perinuclear region. It localises to the endoplasmic reticulum. It carries out the reaction L-seryl-[protein] + ATP = O-phospho-L-seryl-[protein] + ADP + H(+). The catalysed reaction is L-threonyl-[protein] + ATP = O-phospho-L-threonyl-[protein] + ADP + H(+). It catalyses the reaction L-seryl-[tau protein] + ATP = O-phospho-L-seryl-[tau protein] + ADP + H(+). The enzyme catalyses L-threonyl-[tau protein] + ATP = O-phospho-L-threonyl-[tau protein] + ADP + H(+). Activated by phosphorylation on Thr-175 by STK11/LKB1. Serine/threonine-protein kinase that plays a key role in polarization of neurons and axonogenesis, cell cycle progress and insulin secretion. Phosphorylates CDK16, CDC25C, MAPT/TAU, PAK1 and WEE1. Following phosphorylation and activation by STK11/LKB1, acts as a key regulator of polarization of cortical neurons, probably by mediating phosphorylation of microtubule-associated proteins such as MAPT/TAU at 'Thr-523' and 'Ser-573'. Also regulates neuron polarization by mediating phosphorylation of WEE1 at 'Ser-642' in post-mitotic neurons, leading to down-regulate WEE1 activity in polarized neurons. Plays a role in the regulation of the mitotic cell cycle progress and the onset of mitosis. Plays a role in the regulation of insulin secretion in response to elevated glucose levels, probably via phosphorylation of CDK16 and PAK1. While BRSK2 phosphorylated at Thr-175 can inhibit insulin secretion, BRSK2 phosphorylated at Thr-261 can promote insulin secretion. Regulates reorganization of the actin cytoskeleton. May play a role in the apoptotic response triggered by endoplasmic reticulum (ER) stress. In Rattus norvegicus (Rat), this protein is Serine/threonine-protein kinase BRSK2 (Brsk2).